A 450-amino-acid chain; its full sequence is Molybdate-anion transporter (450 aa).

12 helical membrane-spanning segments follow: residues 1–21 (MLVTAYLAFVGLLASCLGLEL), 43–63 (LDFYQVYFLALAADWLQAPYL), 79–99 (ILYVCGLASTVLFGLVASSLV), 128–148 (FVLLVGRALGGLSTALLFSAF), 174–194 (AAFWNHVLAVVAGVAAEAVAS), 195–215 (WIGLGPVAPFVAAIPLLALAG), 249–269 (VLLLGTIQALFESVIFIFVFL), 278–298 (GAPLGIVFSSFMAASLLGSSL), 311–331 (PMHLLSLAVLIVVFSLFMLTF), 344–364 (FIAFLLIELACGLYFPSMSFL), 376–396 (GVLNWFRVPLHLLACLGLLVL), and 409–429 (FSICSAVMVMALLAVVGLFTV).

This sequence belongs to the major facilitator superfamily.

The protein localises to the cell membrane. Functionally, mediates high-affinity intracellular uptake of the rare oligo-element molybdenum. The protein is Molybdate-anion transporter (MFSD5) of Pongo abelii (Sumatran orangutan).